A 73-amino-acid polypeptide reads, in one-letter code: Metallothionein-like protein type 2 (73 aa).

It belongs to the metallothionein superfamily. Type 15 family.

Its function is as follows. Metallothioneins have a high content of cysteine residues that bind various heavy metals. In Solanum lycopersicum (Tomato), this protein is Metallothionein-like protein type 2.